A 1116-amino-acid chain; its full sequence is MKWSNVNSNDSEVVKQSLVVSKSCGASQQTSDITVQVGPAGTIKATKDSSTAIQNLASYMTNAASCGTTILLSKAGDSVAALYAGADVYQSDVGPYLLNFKKQFKAGSQIIQSCDSSSKRDNTIGVYIVNSLDDLEGIDRALQTWSKGSCLDSDGHDLIQSKTTMLGVSEVSKRSDISSSLEGFLAPRAEDNFDKYNTGTDLCKNLKVKQRVCCSAGSLPDIIPKKQSDGTCGTYTIQTNDNCAEIAAHFGVTQDDIYDLNEDTWGWAGCGTNDLKADQVICLSEGNTPMPSPLSNAVCGPQMPDEFCTESPARTKAPGAFQSGKNGCISNCGTYIVNNDDAPENFYHVAYFEVFNLKRECLNMDVNEISDTSLTHVHFAFAGLTADFDVSFDNDEYKAQFEKFVKNDASYKRILSFGGWAESTSASTFQRYRDAVKSGNREKFAKNIKAFFEKYDGLDGIDFDWEYPGATDIPGVPAGSDSDDDNYLGFLKLMKSTIGDKSLSIALPASYWYLKTFPIAKMSDYVSYFIYMTYDLHGQWDYNNAYADVGCPSGDCLRSHVNKTETINSLAMITKAGVPASKIFVGVSSYGRSFGMVDPTCTGPMCKYGGAFDVSTAEAGSCTNTSGYISNAELNLIMQGVDSGASNYKGRTWYDEDSASDVMIYGTKGEITTWVAYMSDDTKEARIDWIKGLNFGGVTDWAIDLQELNLGVDPDSDEAQDLDLPALPTGCSSANWPDNLEDLRNKIDKIDLGCRAQAVVWVLIKILPDILDNYQSAADNYDEYFKYYAEWVRNGIDDSLPLFMWSDGQNYMDCKWSSTSDGSGDAACTEMHVPEGQPGQGEVSITYTVRDEDGFYKALQADYGIEKDWIVWKDIYADPENSLTCPPCPNLTKDCKPCTGHGVTYHNWPVKAADDDIDVPNLKDIIDTAVPNITTLQDVILGSFIEMRIGAMDASDEDVATALSMPVFMIADTTEQMKNITKIGKEQEKADDEAKVSFILDIVSIVLMIIPFAGEAVDAIGGVANVARAAYVVGEAGNAALSVYDIVKNPSSAPFAILGLVMGADASVVGKASKTTFTKAAAFRNALTEDTLSSFSKEFRANDAIVQDIVKACKRA.

One can recognise a LysM domain in the interval 233–283 (GTYTIQTNDNCAEIAAHFGVTQDDIYDLNEDTWGWAGCGTNDLKADQVICL). Positions 346-719 (FYHVAYFEVF…LGVDPDSDEA (374 aa)) constitute a GH18 domain. Glu-466 functions as the Proton donor in the catalytic mechanism. The chitin site is built by Tyr-467 and Trp-701.

The protein belongs to the glycosyl hydrolase 18 family. Chitinase class V subfamily.

It carries out the reaction Random endo-hydrolysis of N-acetyl-beta-D-glucosaminide (1-&gt;4)-beta-linkages in chitin and chitodextrins.. Probable chitinase involved in the degradation of chitin, a component of the cell walls of fungi and exoskeletal elements of some animals (including worms and arthropods). Might be involved in manipulation of host defenses for successful infection. This Penicillium expansum (Blue mold rot fungus) protein is Probable chitinase LysM11.